The following is a 99-amino-acid chain: Bombyxin A-1 homolog (99 aa).

The N-terminal stretch at 1–19 (MKTQVLFLVFALAAVMVSG) is a signal peptide. Cystine bridges form between Cys-27-Cys-86, Cys-39-Cys-99, and Cys-85-Cys-90. Residues 48–76 (TPYISPENEGYGWRWLEPQRARQLDGARG) constitute a propeptide, c peptide like.

Belongs to the insulin family. As to quaternary structure, heterodimer of a B chain and an A chain linked by two disulfide bonds.

It localises to the secreted. In terms of biological role, brain peptide responsible for activation of prothoracic glands to produce ecdysone in insects. This Samia cynthia (Ailanthus silkmoth) protein is Bombyxin A-1 homolog (SBXA1).